We begin with the raw amino-acid sequence, 113 residues long: Retrotransposon Gag-like protein 8B (113 aa).

Belongs to the FAM127 family.

This Homo sapiens (Human) protein is Retrotransposon Gag-like protein 8B (RTL8B).